Reading from the N-terminus, the 321-residue chain is Nod factor export ATP-binding protein I (321 aa).

In terms of domain architecture, ABC transporter spans 17–247 (LSVEGLRKRY…EIGCDVVEVY (231 aa)). 49–56 (GPNGAGKT) is a binding site for ATP.

It belongs to the ABC transporter superfamily. Lipooligosaccharide exporter (TC 3.A.1.102) family. The complex is composed of two ATP-binding proteins (NodI) and two transmembrane proteins (NodJ).

Its subcellular location is the cell inner membrane. Part of the ABC transporter complex NodIJ involved in the export of the nodulation factors (Nod factors), the bacterial signal molecules that induce symbiosis and subsequent nodulation induction. Nod factors are LCO (lipo-chitin oligosaccharide), a modified beta-1,4-linked N-acetylglucosamine oligosaccharide. This subunit is responsible for energy coupling to the transport system. This chain is Nod factor export ATP-binding protein I, found in Ralstonia nicotianae (strain ATCC BAA-1114 / GMI1000) (Ralstonia solanacearum).